Consider the following 200-residue polypeptide: Oligoribonuclease (200 aa).

Positions 5 to 169 (MVWIDCEMTG…ADIRESIAEL (165 aa)) constitute an Exonuclease domain. The active site involves Tyr126.

Belongs to the oligoribonuclease family.

It localises to the cytoplasm. Functionally, 3'-to-5' exoribonuclease specific for small oligoribonucleotides. The sequence is that of Oligoribonuclease from Streptomyces avermitilis (strain ATCC 31267 / DSM 46492 / JCM 5070 / NBRC 14893 / NCIMB 12804 / NRRL 8165 / MA-4680).